The chain runs to 1367 residues: Tonsoku-like protein (1367 aa).

TPR repeat units follow at residues 27 to 60 (AVCC…LESV), 67 to 100 (AVAH…AGSL), 107 to 147 (QRAW…VDEK), 162 to 195 (TRLY…AEQN), 202 to 235 (FRAR…ARAM), 242 to 275 (SECC…GSQK), 311 to 344 (MAIC…AELL), 352 to 385 (AVIH…RKGN), and 390 to 424 (AKTW…AQQA). The tract at residues 460 to 509 (SMAKDTEEEEEEEEEEEEEASEALETSEMELSESEDDADGLSQQLEEEEE) is disordered. Residues 465 to 509 (TEEEEEEEEEEEEEASEALETSEMELSESEDDADGLSQQLEEEEE) are compositionally biased toward acidic residues. ANK repeat units follow at residues 528–557 (MGET…PLNP), 561–590 (CGWT…AVDD), and 597–626 (DGIT…SVTL). 2 disordered regions span residues 660-714 (MERR…EASP) and 726-785 (SAVC…TAIS). The segment covering 666–684 (MASSGQASHSSPALQTIPN) has biased composition (polar residues). The segment covering 692 to 713 (TSPPSSPCPKPPSYTPRPPEAS) has biased composition (pro residues). Residues 772–781 (KTPDPSKSRE) are compositionally biased toward basic and acidic residues. R797 carries the omega-N-methylarginine modification. Disordered regions lie at residues 798–820 (GVGS…EVPA) and 841–910 (TPLT…GPNK). Over residues 844–857 (TRSSSSSRPSTSIS) the composition is skewed to low complexity. The span at 894 to 909 (AEPTENSSMPRTTGPN) shows a compositional bias: polar residues. 7 LRR repeats span residues 1062-1086 (HTAL…LLAT), 1090-1118 (MPNL…SLGQ), 1121-1144 (FQNV…ALAS), 1181-1205 (AEHL…VLQS), 1240-1263 (GCAL…ELSR), 1268-1293 (CPSL…LLSA), and 1324-1347 (LSQL…TLCQ).

It belongs to the Tonsoku family. Component of the MMS22L-TONSL complex, a complex at least composed of MMS22L and TONSL/NFKBIL2. Interacts with the MCM complex, the FACT complex and the RPA complex. Interacts with MCM5; the interaction is direct. Binds histones, with a strong preference for histone H3.1 (histones H3.1 and H3-4/H3.1t). Interacts (via ANK repeats) with histone H4; specifically binds histone H4 lacking methylation at 'Lys-20' (H4K20me0). May interact with DNAJC9; the interaction seems to be histone-dependent.

It is found in the nucleus. Its subcellular location is the chromosome. The protein localises to the cytoplasm. Functionally, component of the MMS22L-TONSL complex, a complex that promotes homologous recombination-mediated repair of double-strand breaks (DSBs) at stalled or collapsed replication forks. The MMS22L-TONSL complex is required to maintain genome integrity during DNA replication. It mediates the assembly of RAD51 filaments on single-stranded DNA (ssDNA): the MMS22L-TONSL complex is recruited to DSBs following histone replacement by histone chaperones and eviction of the replication protein A complex (RPA/RP-A) from DSBs. Following recruitment to DSBs, the TONSL-MMS22L complex promotes recruitment of RAD51 filaments and subsequent homologous recombination. Within the complex, TONSL acts as a histone reader, which recognizes and binds newly synthesized histones following their replacement by histone chaperones. Specifically binds histone H4 lacking methylation at 'Lys-20' (H4K20me0) and histone H3.1. This chain is Tonsoku-like protein, found in Rattus norvegicus (Rat).